A 946-amino-acid chain; its full sequence is Leucine--tRNA ligase (946 aa).

Positions 43–53 (PYPNGTIHIGH) match the 'HIGH' region motif. Positions 638–642 (KMSKS) match the 'KMSKS' region motif. Position 641 (lysine 641) interacts with ATP.

It belongs to the class-I aminoacyl-tRNA synthetase family.

It is found in the cytoplasm. It carries out the reaction tRNA(Leu) + L-leucine + ATP = L-leucyl-tRNA(Leu) + AMP + diphosphate. The polypeptide is Leucine--tRNA ligase (Pyrobaculum calidifontis (strain DSM 21063 / JCM 11548 / VA1)).